Here is a 377-residue protein sequence, read N- to C-terminus: Nitric oxide reductase FlRd-NAD(+) reductase (377 aa).

The protein belongs to the FAD-dependent oxidoreductase family. FAD is required as a cofactor.

It is found in the cytoplasm. It catalyses the reaction 2 reduced [nitric oxide reductase rubredoxin domain] + NAD(+) + H(+) = 2 oxidized [nitric oxide reductase rubredoxin domain] + NADH. Its pathway is nitrogen metabolism; nitric oxide reduction. One of at least two accessory proteins for anaerobic nitric oxide (NO) reductase. Reduces the rubredoxin moiety of NO reductase. The chain is Nitric oxide reductase FlRd-NAD(+) reductase from Escherichia coli O127:H6 (strain E2348/69 / EPEC).